The sequence spans 248 residues: NH(3)-dependent NAD(+) synthetase (248 aa).

30–37 (GLSGGIDS) serves as a coordination point for ATP. Residue D36 coordinates Mg(2+). Residue R114 participates in deamido-NAD(+) binding. T134 lines the ATP pocket. E139 contacts Mg(2+). Positions 147 and 154 each coordinate deamido-NAD(+). Positions 163 and 185 each coordinate ATP. A deamido-NAD(+)-binding site is contributed by 232-233 (HK).

The protein belongs to the NAD synthetase family. In terms of assembly, homodimer.

It carries out the reaction deamido-NAD(+) + NH4(+) + ATP = AMP + diphosphate + NAD(+) + H(+). It functions in the pathway cofactor biosynthesis; NAD(+) biosynthesis; NAD(+) from deamido-NAD(+) (ammonia route): step 1/1. Catalyzes the ATP-dependent amidation of deamido-NAD to form NAD. Uses ammonia as a nitrogen source. This chain is NH(3)-dependent NAD(+) synthetase, found in Mycoplasma genitalium (strain ATCC 33530 / DSM 19775 / NCTC 10195 / G37) (Mycoplasmoides genitalium).